A 262-amino-acid polypeptide reads, in one-letter code: Glutamate racemase (262 aa).

Substrate contacts are provided by residues 5–6 (DS) and 37–38 (YG). The active-site Proton donor/acceptor is cysteine 69. Substrate is bound at residue 70 to 71 (NT). Cysteine 181 (proton donor/acceptor) is an active-site residue. 182–183 (TH) is a binding site for substrate.

Belongs to the aspartate/glutamate racemases family.

The catalysed reaction is L-glutamate = D-glutamate. Its pathway is cell wall biogenesis; peptidoglycan biosynthesis. Functionally, provides the (R)-glutamate required for cell wall biosynthesis. The sequence is that of Glutamate racemase from Buchnera aphidicola subsp. Acyrthosiphon pisum (strain APS) (Acyrthosiphon pisum symbiotic bacterium).